The primary structure comprises 552 residues: Lysine--tRNA ligase (552 aa).

Residues 72-80 (PSGLPHLGT) carry the 'HIGH' region motif. A 'KMSKS' region motif is present at residues 320-324 (KISKS). Position 323 (K323) interacts with ATP.

It belongs to the class-I aminoacyl-tRNA synthetase family.

It localises to the cytoplasm. The catalysed reaction is tRNA(Lys) + L-lysine + ATP = L-lysyl-tRNA(Lys) + AMP + diphosphate. This is Lysine--tRNA ligase from Caulobacter vibrioides (strain ATCC 19089 / CIP 103742 / CB 15) (Caulobacter crescentus).